A 1378-amino-acid chain; its full sequence is DNA-directed RNA polymerase subunit beta (1378 aa).

Belongs to the RNA polymerase beta chain family. In terms of assembly, the RNAP catalytic core consists of 2 alpha, 1 beta, 1 beta' and 1 omega subunit. When a sigma factor is associated with the core the holoenzyme is formed, which can initiate transcription.

It carries out the reaction RNA(n) + a ribonucleoside 5'-triphosphate = RNA(n+1) + diphosphate. DNA-dependent RNA polymerase catalyzes the transcription of DNA into RNA using the four ribonucleoside triphosphates as substrates. In Hyphomonas neptunium (strain ATCC 15444), this protein is DNA-directed RNA polymerase subunit beta.